The sequence spans 424 residues: Carbohydrate sulfotransferase 8 (424 aa).

Residues Met1–Leu10 lie on the Cytoplasmic side of the membrane. Residues Ala11–Leu31 traverse the membrane as a helical; Signal-anchor for type II membrane protein segment. Over Gln32–Tyr424 the chain is Lumenal. Residues Phe47–Leu107 form a disordered region. The span at Gly66–Arg77 shows a compositional bias: basic and acidic residues. N-linked (GlcNAc...) asparagine glycosylation occurs at Asn128. Residues Pro198–Asn204 and Arg258–Ser266 contribute to the 3'-phosphoadenylyl sulfate site. Residues Asn294, Asn367, and Asn415 are each glycosylated (N-linked (GlcNAc...) asparagine).

Belongs to the sulfotransferase 2 family. In terms of tissue distribution, predominantly expressed in pituitary gland. In brain, it is expressed in pituitary gland, cerebellum, medulla oblongata, pons, thalamus and spinal cord. Expressed in the epidermis. Expressed at lower level in lung, spleen, adrenal gland, placenta, prostate, testis, mammary gland and trachea.

The protein localises to the golgi apparatus membrane. Functionally, catalyzes the transfer of sulfate to position 4 of non-reducing N-acetylgalactosamine (GalNAc) residues in both N-glycans and O-glycans. Required for biosynthesis of glycoprotein hormones lutropin and thyrotropin, by mediating sulfation of their carbohydrate structures. Only active against terminal GalNAcbeta1,GalNAcbeta. Not active toward chondroitin. The polypeptide is Carbohydrate sulfotransferase 8 (CHST8) (Homo sapiens (Human)).